The sequence spans 460 residues: Serine hydroxymethyltransferase, cytosolic (460 aa).

Residue lysine 244 is modified to N6-(pyridoxal phosphate)lysine.

The protein belongs to the SHMT family. As to quaternary structure, homotetramer. Pyridoxal 5'-phosphate is required as a cofactor.

The protein resides in the cytoplasm. The enzyme catalyses (6R)-5,10-methylene-5,6,7,8-tetrahydrofolate + glycine + H2O = (6S)-5,6,7,8-tetrahydrofolate + L-serine. It functions in the pathway one-carbon metabolism; tetrahydrofolate interconversion. Interconversion of serine and glycine. This Encephalitozoon cuniculi (strain GB-M1) (Microsporidian parasite) protein is Serine hydroxymethyltransferase, cytosolic (SHMT-1).